The primary structure comprises 142 residues: Large ribosomal subunit protein uL13 (142 aa).

This sequence belongs to the universal ribosomal protein uL13 family. Part of the 50S ribosomal subunit.

This protein is one of the early assembly proteins of the 50S ribosomal subunit, although it is not seen to bind rRNA by itself. It is important during the early stages of 50S assembly. This chain is Large ribosomal subunit protein uL13, found in Pseudomonas fluorescens (strain ATCC BAA-477 / NRRL B-23932 / Pf-5).